Here is a 138-residue protein sequence, read N- to C-terminus: Small ribosomal subunit protein uS11c (138 aa).

The interval 1 to 25 is disordered; it reads MAKSIPRTGSRRNVRSGSRKSTRRI. Over residues 9 to 25 the composition is skewed to basic residues; it reads GSRRNVRSGSRKSTRRI.

The protein belongs to the universal ribosomal protein uS11 family. As to quaternary structure, part of the 30S ribosomal subunit.

Its subcellular location is the plastid. The protein localises to the chloroplast. In Eucalyptus globulus subsp. globulus (Tasmanian blue gum), this protein is Small ribosomal subunit protein uS11c.